Consider the following 368-residue polypeptide: Probable dual-specificity RNA methyltransferase RlmN (368 aa).

Residue E108 is the Proton acceptor of the active site. Residues H114 to D345 enclose the Radical SAM core domain. Cysteines 121 and 350 form a disulfide. [4Fe-4S] cluster contacts are provided by C128, C132, and C135. Residues G175–E176, S207, S230–H232, and N307 contribute to the S-adenosyl-L-methionine site. Catalysis depends on C350, which acts as the S-methylcysteine intermediate.

It belongs to the radical SAM superfamily. RlmN family. [4Fe-4S] cluster is required as a cofactor.

It localises to the cytoplasm. The enzyme catalyses adenosine(2503) in 23S rRNA + 2 reduced [2Fe-2S]-[ferredoxin] + 2 S-adenosyl-L-methionine = 2-methyladenosine(2503) in 23S rRNA + 5'-deoxyadenosine + L-methionine + 2 oxidized [2Fe-2S]-[ferredoxin] + S-adenosyl-L-homocysteine. It catalyses the reaction adenosine(37) in tRNA + 2 reduced [2Fe-2S]-[ferredoxin] + 2 S-adenosyl-L-methionine = 2-methyladenosine(37) in tRNA + 5'-deoxyadenosine + L-methionine + 2 oxidized [2Fe-2S]-[ferredoxin] + S-adenosyl-L-homocysteine. Specifically methylates position 2 of adenine 2503 in 23S rRNA and position 2 of adenine 37 in tRNAs. The polypeptide is Probable dual-specificity RNA methyltransferase RlmN (Pelotomaculum thermopropionicum (strain DSM 13744 / JCM 10971 / SI)).